Here is a 423-residue protein sequence, read N- to C-terminus: Gamma-glutamyl phosphate reductase (423 aa).

Belongs to the gamma-glutamyl phosphate reductase family.

The protein resides in the cytoplasm. The enzyme catalyses L-glutamate 5-semialdehyde + phosphate + NADP(+) = L-glutamyl 5-phosphate + NADPH + H(+). It functions in the pathway amino-acid biosynthesis; L-proline biosynthesis; L-glutamate 5-semialdehyde from L-glutamate: step 2/2. Functionally, catalyzes the NADPH-dependent reduction of L-glutamate 5-phosphate into L-glutamate 5-semialdehyde and phosphate. The product spontaneously undergoes cyclization to form 1-pyrroline-5-carboxylate. The chain is Gamma-glutamyl phosphate reductase from Pseudomonas putida (strain ATCC 47054 / DSM 6125 / CFBP 8728 / NCIMB 11950 / KT2440).